The sequence spans 24 residues: Unknown protein 6 (24 aa).

The polypeptide is Unknown protein 6 (Lonomia obliqua (Moth)).